Reading from the N-terminus, the 568-residue chain is 2-succinyl-5-enolpyruvyl-6-hydroxy-3-cyclohexene-1-carboxylate synthase (568 aa).

The protein belongs to the TPP enzyme family. MenD subfamily. As to quaternary structure, homodimer. The cofactor is Mg(2+). Requires Mn(2+) as cofactor. Thiamine diphosphate serves as cofactor.

It carries out the reaction isochorismate + 2-oxoglutarate + H(+) = 5-enolpyruvoyl-6-hydroxy-2-succinyl-cyclohex-3-ene-1-carboxylate + CO2. It functions in the pathway quinol/quinone metabolism; 1,4-dihydroxy-2-naphthoate biosynthesis; 1,4-dihydroxy-2-naphthoate from chorismate: step 2/7. The protein operates within quinol/quinone metabolism; menaquinone biosynthesis. In terms of biological role, catalyzes the thiamine diphosphate-dependent decarboxylation of 2-oxoglutarate and the subsequent addition of the resulting succinic semialdehyde-thiamine pyrophosphate anion to isochorismate to yield 2-succinyl-5-enolpyruvyl-6-hydroxy-3-cyclohexene-1-carboxylate (SEPHCHC). The chain is 2-succinyl-5-enolpyruvyl-6-hydroxy-3-cyclohexene-1-carboxylate synthase from Actinobacillus succinogenes (strain ATCC 55618 / DSM 22257 / CCUG 43843 / 130Z).